The following is a 283-amino-acid chain: MASARDLRRRIKSVKSTQQITKAMKMVAAAKLRRAQEAVEAARPFALKIKDVLSRVAAASGGASHPLLEEREVKTIAYVIITADRGLCGGFNANILRRAASEVRDVNNPAIVAVGTKSRDYFTRRGYDITASYVRLGEAIQFSQAKEIARFVIDKYVAGEFDEVHLVFSEFVNILTQRPVKVKLLPVETPTEEKKGPQVEYIFEPSAEAVLAELLPTYVETTVFRAMLEAKAGEQGARMTAMDSATKNAKELINKLTLSLNRARQAAITKEISEIVGGAAALE.

The protein belongs to the ATPase gamma chain family. F-type ATPases have 2 components, CF(1) - the catalytic core - and CF(0) - the membrane proton channel. CF(1) has five subunits: alpha(3), beta(3), gamma(1), delta(1), epsilon(1). CF(0) has three main subunits: a, b and c.

It is found in the cell membrane. Functionally, produces ATP from ADP in the presence of a proton gradient across the membrane. The gamma chain is believed to be important in regulating ATPase activity and the flow of protons through the CF(0) complex. The protein is ATP synthase gamma chain of Desulforamulus reducens (strain ATCC BAA-1160 / DSM 100696 / MI-1) (Desulfotomaculum reducens).